The following is a 595-amino-acid chain: Thiol:disulfide interchange protein DsbD (595 aa).

The N-terminal stretch at 1-24 (MAQRFITLILLLCSVLLAPHSAQS) is a signal peptide. Cysteines 134 and 140 form a disulfide. A disordered region spans residues 166–186 (NSSATVNPPATTQPEGDATPV). 9 consecutive transmembrane segments (helical) span residues 197–217 (ALLI…YPLI), 233–253 (ILIL…LLGL), 270–290 (YVLI…FGLY), 311–331 (GGSL…CSPC), 332–352 (TTAP…MLAG), 353–373 (GGTL…VTLF), 384–404 (WMQY…VFLL), 411–431 (VWGL…AFVL), and 435–455 (AHAG…LIVA). Cysteines 209 and 331 form a disulfide. The region spanning 452-592 (LIVARPLQDW…FLQHLQNTPA (141 aa)) is the Thioredoxin domain. Residues Cys-507 and Cys-510 are joined by a disulfide bond.

Belongs to the thioredoxin family. DsbD subfamily.

The protein localises to the cell inner membrane. The catalysed reaction is [protein]-dithiol + NAD(+) = [protein]-disulfide + NADH + H(+). The enzyme catalyses [protein]-dithiol + NADP(+) = [protein]-disulfide + NADPH + H(+). Functionally, required to facilitate the formation of correct disulfide bonds in some periplasmic proteins and for the assembly of the periplasmic c-type cytochromes. Acts by transferring electrons from cytoplasmic thioredoxin to the periplasm. This transfer involves a cascade of disulfide bond formation and reduction steps. This is Thiol:disulfide interchange protein DsbD from Yersinia pestis bv. Antiqua (strain Nepal516).